We begin with the raw amino-acid sequence, 330 residues long: DNA-directed RNA polymerase subunit alpha (330 aa).

Residues 1–236 (MQNSVIEFLK…EQLEAFIDLR (236 aa)) are alpha N-terminal domain (alpha-NTD). An alpha C-terminal domain (alpha-CTD) region spans residues 250 to 330 (FDPILLRLVD…NWPPTNILDN (81 aa)).

It belongs to the RNA polymerase alpha chain family. In terms of assembly, homodimer. The RNAP catalytic core consists of 2 alpha, 1 beta, 1 beta' and 1 omega subunit. When a sigma factor is associated with the core the holoenzyme is formed, which can initiate transcription.

It catalyses the reaction RNA(n) + a ribonucleoside 5'-triphosphate = RNA(n+1) + diphosphate. DNA-dependent RNA polymerase catalyzes the transcription of DNA into RNA using the four ribonucleoside triphosphates as substrates. The protein is DNA-directed RNA polymerase subunit alpha of Blochmanniella pennsylvanica (strain BPEN).